Here is a 461-residue protein sequence, read N- to C-terminus: Carbamoyl phosphate synthase arginine-specific small chain (461 aa).

The 188-residue stretch at 240-427 folds into the Glutamine amidotransferase type-1 domain; that stretch reads HVALIDCGVK…LENVQMYKDN (188 aa). Cys-316 acts as the Nucleophile in catalysis. Catalysis depends on residues His-400 and Glu-402.

Belongs to the CarA family. Heterodimer composed of 2 chains; the small (or glutamine) chain promotes the hydrolysis of glutamine to ammonia, which is used by the large (or ammonia) chain to synthesize carbamoyl phosphate.

It localises to the cytoplasm. The enzyme catalyses hydrogencarbonate + L-glutamine + 2 ATP + H2O = carbamoyl phosphate + L-glutamate + 2 ADP + phosphate + 2 H(+). It catalyses the reaction L-glutamine + H2O = L-glutamate + NH4(+). It functions in the pathway amino-acid biosynthesis; L-arginine biosynthesis; carbamoyl phosphate from bicarbonate: step 1/1. In terms of biological role, small subunit of the arginine-specific carbamoyl phosphate synthase (CPSase). CPSase catalyzes the formation of carbamoyl phosphate from the ammonia moiety of glutamine, carbonate, and phosphate donated by ATP, constituting the first step of 2 biosynthetic pathways, one leading to arginine and/or urea and the other to pyrimidine nucleotides. The small subunit (glutamine amidotransferase) binds and cleaves glutamine to supply the large subunit with the substrate ammonia. This Chaetomium globosum (strain ATCC 6205 / CBS 148.51 / DSM 1962 / NBRC 6347 / NRRL 1970) (Soil fungus) protein is Carbamoyl phosphate synthase arginine-specific small chain (CPA1).